The following is a 197-amino-acid chain: Adenylate kinase (197 aa).

Residue 12 to 17 participates in ATP binding; sequence GSGKTT. Residues 34–63 are NMP; the sequence is STGDMLREEVASGSELGKTIESYIAKGALV. AMP is bound by residues Thr-35, Arg-40, 61-63, 88-91, and Gln-95; these read ALV and GYPR. The interval 130-144 is LID; it reads GRRAEAAPGEERSDD. Arg-131 provides a ligand contact to ATP. Residues Arg-141 and Arg-152 each contribute to the AMP site. Residue Arg-180 participates in ATP binding.

This sequence belongs to the adenylate kinase family. As to quaternary structure, monomer.

Its subcellular location is the cytoplasm. The catalysed reaction is AMP + ATP = 2 ADP. Its pathway is purine metabolism; AMP biosynthesis via salvage pathway; AMP from ADP: step 1/1. Its function is as follows. Catalyzes the reversible transfer of the terminal phosphate group between ATP and AMP. Plays an important role in cellular energy homeostasis and in adenine nucleotide metabolism. The polypeptide is Adenylate kinase (Sulfurovum sp. (strain NBC37-1)).